We begin with the raw amino-acid sequence, 1064 residues long: Alpha-aminoadipic semialdehyde synthase (1064 aa).

The tract at residues 24-445 (VNKWERRTPL…RACISYRGEL (422 aa)) is lysine-ketoglutarate reductase. A Phosphothreonine modification is found at Thr238. Phosphoserine is present on Ser458. The tract at residues 583–1064 (MTKKSGVLIL…YGIKLMEKAE (482 aa)) is saccharopine dehydrogenase. Residues 703–704 (SY), Asp730, Arg830, and 852–854 (TLR) contribute to the L-saccharopine site. An NADP(+)-binding site is contributed by 729–731 (LDP).

The protein in the N-terminal section; belongs to the AlaDH/PNT family. In the C-terminal section; belongs to the saccharopine dehydrogenase family. In terms of assembly, homodimer. In terms of processing, phosphorylation of Ser-458 seems important for the LKR activity. In terms of tissue distribution, ubiquitous, with higher levels in flowers. Isoform Long is mostly present in young leaves, cotyledons, root tips and mature root parts. Whereas isoform Short is mostly expressed in cotyledons and at low levels in all root parts.

The protein resides in the cytoplasm. It carries out the reaction L-saccharopine + NADP(+) + H2O = L-lysine + 2-oxoglutarate + NADPH + H(+). The catalysed reaction is L-saccharopine + NAD(+) + H2O = (S)-2-amino-6-oxohexanoate + L-glutamate + NADH + H(+). Its pathway is amino-acid degradation; L-lysine degradation via saccharopine pathway; glutaryl-CoA from L-lysine: step 1/6. It functions in the pathway amino-acid degradation; L-lysine degradation via saccharopine pathway; glutaryl-CoA from L-lysine: step 2/6. With respect to regulation, the LKR activity is stimulated by NaCl. Bifunctional enzyme that catalyzes the first two steps in lysine degradation. The N-terminal and the C-terminal contain lysine-oxoglutarate reductase and saccharopine dehydrogenase activity, respectively. Negatively regulates free Lys accumulation in seeds. This is Alpha-aminoadipic semialdehyde synthase (LKR/SDH) from Arabidopsis thaliana (Mouse-ear cress).